The sequence spans 654 residues: Heat shock 70 kDa protein 2 (654 aa).

Over residues 612 to 646 (AGGEGGAPGAGFPGAGGPGGFPGAGAGGAHSGGDD) the composition is skewed to gly residues. Residues 612 to 654 (AGGEGGAPGAGFPGAGGPGGFPGAGAGGAHSGGDDGPTVEEVD) form a disordered region.

It belongs to the heat shock protein 70 family.

The chain is Heat shock 70 kDa protein 2 (HSP70-2) from Paracoccidioides lutzii (strain ATCC MYA-826 / Pb01) (Paracoccidioides brasiliensis).